Here is a 692-residue protein sequence, read N- to C-terminus: Elongation factor G (692 aa).

In terms of domain architecture, tr-type G spans E8–L282. Residues A17 to T24, D81 to H85, and N135 to D138 contribute to the GTP site.

This sequence belongs to the TRAFAC class translation factor GTPase superfamily. Classic translation factor GTPase family. EF-G/EF-2 subfamily.

It is found in the cytoplasm. Its function is as follows. Catalyzes the GTP-dependent ribosomal translocation step during translation elongation. During this step, the ribosome changes from the pre-translocational (PRE) to the post-translocational (POST) state as the newly formed A-site-bound peptidyl-tRNA and P-site-bound deacylated tRNA move to the P and E sites, respectively. Catalyzes the coordinated movement of the two tRNA molecules, the mRNA and conformational changes in the ribosome. The chain is Elongation factor G (fusA) from Halalkalibacterium halodurans (strain ATCC BAA-125 / DSM 18197 / FERM 7344 / JCM 9153 / C-125) (Bacillus halodurans).